The primary structure comprises 458 residues: ATP synthase subunit beta (458 aa).

An ATP-binding site is contributed by 148 to 155 (GGAGVGKT).

This sequence belongs to the ATPase alpha/beta chains family. F-type ATPases have 2 components, CF(1) - the catalytic core - and CF(0) - the membrane proton channel. CF(1) has five subunits: alpha(3), beta(3), gamma(1), delta(1), epsilon(1). CF(0) has three main subunits: a(1), b(2) and c(9-12). The alpha and beta chains form an alternating ring which encloses part of the gamma chain. CF(1) is attached to CF(0) by a central stalk formed by the gamma and epsilon chains, while a peripheral stalk is formed by the delta and b chains.

It localises to the cell inner membrane. It carries out the reaction ATP + H2O + 4 H(+)(in) = ADP + phosphate + 5 H(+)(out). Functionally, produces ATP from ADP in the presence of a proton gradient across the membrane. The catalytic sites are hosted primarily by the beta subunits. This Pseudomonas fluorescens (strain Pf0-1) protein is ATP synthase subunit beta.